Here is a 616-residue protein sequence, read N- to C-terminus: Dihydroxy-acid dehydratase (616 aa).

Aspartate 81 contacts Mg(2+). Cysteine 122 contacts [2Fe-2S] cluster. Positions 123 and 124 each coordinate Mg(2+). Residue lysine 124 is modified to N6-carboxylysine. A [2Fe-2S] cluster-binding site is contributed by cysteine 195. Mg(2+) is bound at residue glutamate 491. The Proton acceptor role is filled by serine 517.

Belongs to the IlvD/Edd family. Homodimer. Requires [2Fe-2S] cluster as cofactor. Mg(2+) is required as a cofactor.

It catalyses the reaction (2R)-2,3-dihydroxy-3-methylbutanoate = 3-methyl-2-oxobutanoate + H2O. The enzyme catalyses (2R,3R)-2,3-dihydroxy-3-methylpentanoate = (S)-3-methyl-2-oxopentanoate + H2O. It participates in amino-acid biosynthesis; L-isoleucine biosynthesis; L-isoleucine from 2-oxobutanoate: step 3/4. It functions in the pathway amino-acid biosynthesis; L-valine biosynthesis; L-valine from pyruvate: step 3/4. In terms of biological role, functions in the biosynthesis of branched-chain amino acids. Catalyzes the dehydration of (2R,3R)-2,3-dihydroxy-3-methylpentanoate (2,3-dihydroxy-3-methylvalerate) into 2-oxo-3-methylpentanoate (2-oxo-3-methylvalerate) and of (2R)-2,3-dihydroxy-3-methylbutanoate (2,3-dihydroxyisovalerate) into 2-oxo-3-methylbutanoate (2-oxoisovalerate), the penultimate precursor to L-isoleucine and L-valine, respectively. This Blochmanniella pennsylvanica (strain BPEN) protein is Dihydroxy-acid dehydratase.